Here is a 282-residue protein sequence, read N- to C-terminus: MSIDAKLVKELREKTGAGMMDCKKALEESGGDMEKAITWLRQKGLAGAAKKASRVAAEGVVDSYIHFGNRIGVLVEVNCETDFVARNEDFKKLVQDIAKQIAACQSVEYVSIDQIPPEVVERERAIEMGKEDLASKPENVREKIVQGRIEKRLKELSLMDQPFIKDSSITVEELVKQHIAKLGENIRVRRFARFVLGEGIEKQEADFAAEVAAQAGLKPAQPAQVAEVAAAPPAEPVADQPAAEPPAESVAPEPVVAESADAEPAPAAEGKPSKKGSTKKKK.

The interval 81–84 (TDFV) is involved in Mg(2+) ion dislocation from EF-Tu. The span at 218–270 (KPAQPAQVAEVAAAPPAEPVADQPAAEPPAESVAPEPVVAESADAEPAPAAEG) shows a compositional bias: low complexity. Positions 218 to 282 (KPAQPAQVAE…SKKGSTKKKK (65 aa)) are disordered. Residues 273-282 (SKKGSTKKKK) are compositionally biased toward basic residues.

The protein belongs to the EF-Ts family.

It is found in the cytoplasm. In terms of biological role, associates with the EF-Tu.GDP complex and induces the exchange of GDP to GTP. It remains bound to the aminoacyl-tRNA.EF-Tu.GTP complex up to the GTP hydrolysis stage on the ribosome. This chain is Elongation factor Ts, found in Synechococcus sp. (strain JA-3-3Ab) (Cyanobacteria bacterium Yellowstone A-Prime).